The following is a 310-amino-acid chain: Homoserine kinase (310 aa).

91-101 (PIGSGLGSSAC) serves as a coordination point for ATP.

The protein belongs to the GHMP kinase family. Homoserine kinase subfamily.

Its subcellular location is the cytoplasm. It catalyses the reaction L-homoserine + ATP = O-phospho-L-homoserine + ADP + H(+). The protein operates within amino-acid biosynthesis; L-threonine biosynthesis; L-threonine from L-aspartate: step 4/5. Its function is as follows. Catalyzes the ATP-dependent phosphorylation of L-homoserine to L-homoserine phosphate. This is Homoserine kinase from Escherichia coli O17:K52:H18 (strain UMN026 / ExPEC).